Here is a 73-residue protein sequence, read N- to C-terminus: Large ribosomal subunit protein uL24 (73 aa).

The segment covering 51-65 has biased composition (basic and acidic residues); that stretch reads DDNPKGGFIHKEKPM. Residues 51–73 form a disordered region; it reads DDNPKGGFIHKEKPMHISNVKKA.

The protein belongs to the universal ribosomal protein uL24 family. In terms of assembly, part of the 50S ribosomal subunit.

Functionally, one of two assembly initiator proteins, it binds directly to the 5'-end of the 23S rRNA, where it nucleates assembly of the 50S subunit. In terms of biological role, one of the proteins that surrounds the polypeptide exit tunnel on the outside of the subunit. This chain is Large ribosomal subunit protein uL24, found in Helicobacter acinonychis (strain Sheeba).